A 146-amino-acid chain; its full sequence is BCL7-like protein (146 aa).

The disordered stretch occupies residues 59–146; it reads MAPPKIKEVK…RDAEMTSKQP (88 aa). Polar residues-rich tracts occupy residues 75–90 and 113–134; these read NQVP…TSVT and DSNQ…TDFS. Residues 135 to 146 show a composition bias toward basic and acidic residues; the sequence is SMRDAEMTSKQP.

Belongs to the BCL7 family. In terms of tissue distribution, ubiquitous.

Its subcellular location is the nucleus. Required for the terminal differentiation of seam cells, and the differentiation of distal tip cells important for normal somatic gonad and germ cell development. Plays a role in the Wnt signaling pathway, regulating the expression of beta-catenin homologs wrm-1, bar-1 and sys-1, and the localization of wrm-1 and the wnt signaling pathway component pop-1 during asymmetric cell division of seam cells and the Z-cell lineage of the somatic gonad, respectively. May have a pro-apoptotic role, possibly linked to the negative regulation of expression of anti-apoptotic factor ced-9. This is BCL7-like protein from Caenorhabditis elegans.